Reading from the N-terminus, the 281-residue chain is MQPPSFSTSEDTVQPVSAASPIASDDASSAFVVAVPARYASTRLPGKPLQLIGDRPMIQHVADRALAAGAREVWVATDDARIAEAIQGLAGVRVAMTSSVHLSGTDRLAECARIAGWDAATCVVNLQGDEPFAPAAGIRAVAQVLQRSGAEMATLAAPVDSAHDLFDPNVVKLVRNAHGDALYFSRAPIPWHRDSFAGQRDAVPAGNHWLRHIGIYAYRAGFLQQFAAMPPGTLERIESLEQLRVLEAGYRIAVALTPEQFPPGIDTPEDLQRAQAQLASA.

Belongs to the KdsB family.

Its subcellular location is the cytoplasm. It catalyses the reaction 3-deoxy-alpha-D-manno-oct-2-ulosonate + CTP = CMP-3-deoxy-beta-D-manno-octulosonate + diphosphate. Its pathway is nucleotide-sugar biosynthesis; CMP-3-deoxy-D-manno-octulosonate biosynthesis; CMP-3-deoxy-D-manno-octulosonate from 3-deoxy-D-manno-octulosonate and CTP: step 1/1. It functions in the pathway bacterial outer membrane biogenesis; lipopolysaccharide biosynthesis. Its function is as follows. Activates KDO (a required 8-carbon sugar) for incorporation into bacterial lipopolysaccharide in Gram-negative bacteria. The sequence is that of 3-deoxy-manno-octulosonate cytidylyltransferase from Xanthomonas campestris pv. campestris (strain B100).